The chain runs to 954 residues: Glycine dehydrogenase (decarboxylating) (954 aa).

An N6-(pyridoxal phosphate)lysine modification is found at lysine 704.

This sequence belongs to the GcvP family. The glycine cleavage system is composed of four proteins: P, T, L and H. Pyridoxal 5'-phosphate is required as a cofactor.

The catalysed reaction is N(6)-[(R)-lipoyl]-L-lysyl-[glycine-cleavage complex H protein] + glycine + H(+) = N(6)-[(R)-S(8)-aminomethyldihydrolipoyl]-L-lysyl-[glycine-cleavage complex H protein] + CO2. Functionally, the glycine cleavage system catalyzes the degradation of glycine. The P protein binds the alpha-amino group of glycine through its pyridoxal phosphate cofactor; CO(2) is released and the remaining methylamine moiety is then transferred to the lipoamide cofactor of the H protein. In Rhizobium johnstonii (strain DSM 114642 / LMG 32736 / 3841) (Rhizobium leguminosarum bv. viciae), this protein is Glycine dehydrogenase (decarboxylating).